The primary structure comprises 551 residues: Membrane protein insertase YidC (551 aa).

A helical transmembrane segment spans residues 3–23; that stretch reads ANHIRILLLVTIAIMFISLMG. The span at 33-47 shows a compositional bias: polar residues; the sequence is NTKQQTSATQNNSHY. The interval 33-59 is disordered; that stretch reads NTKQQTSATQNNSHYDNADSSTNTDVT. A compositionally biased stretch (low complexity) spans 50–59; it reads ADSSTNTDVT. The next 3 membrane-spanning stretches (helical) occupy residues 361–381, 431–451, and 504–524; these read LVGN…LIFY, LSGC…YWVL, and VMMF…SGLV.

The protein belongs to the OXA1/ALB3/YidC family. Type 1 subfamily. In terms of assembly, interacts with the Sec translocase complex via SecD. Specifically interacts with transmembrane segments of nascent integral membrane proteins during membrane integration.

The protein resides in the cell inner membrane. Required for the insertion and/or proper folding and/or complex formation of integral membrane proteins into the membrane. Involved in integration of membrane proteins that insert both dependently and independently of the Sec translocase complex, as well as at least some lipoproteins. Aids folding of multispanning membrane proteins. The sequence is that of Membrane protein insertase YidC from Francisella tularensis subsp. mediasiatica (strain FSC147).